The following is a 416-amino-acid chain: Serine--tRNA ligase (416 aa).

Residue 232 to 234 (TAE) coordinates L-serine. 263–265 (RKE) provides a ligand contact to ATP. Glu-286 contacts L-serine. Residue 350-353 (EISS) coordinates ATP. Ser-384 is a binding site for L-serine.

It belongs to the class-II aminoacyl-tRNA synthetase family. Type-1 seryl-tRNA synthetase subfamily. In terms of assembly, homodimer. The tRNA molecule binds across the dimer.

The protein localises to the cytoplasm. It catalyses the reaction tRNA(Ser) + L-serine + ATP = L-seryl-tRNA(Ser) + AMP + diphosphate + H(+). The enzyme catalyses tRNA(Sec) + L-serine + ATP = L-seryl-tRNA(Sec) + AMP + diphosphate + H(+). The protein operates within aminoacyl-tRNA biosynthesis; selenocysteinyl-tRNA(Sec) biosynthesis; L-seryl-tRNA(Sec) from L-serine and tRNA(Sec): step 1/1. Functionally, catalyzes the attachment of serine to tRNA(Ser). Is also able to aminoacylate tRNA(Sec) with serine, to form the misacylated tRNA L-seryl-tRNA(Sec), which will be further converted into selenocysteinyl-tRNA(Sec). The protein is Serine--tRNA ligase of Nautilia profundicola (strain ATCC BAA-1463 / DSM 18972 / AmH).